A 137-amino-acid polypeptide reads, in one-letter code: Large ribosomal subunit protein uL16 (137 aa).

A compositionally biased stretch (basic residues) spans 1 to 16 (MLQPKRTKFRKVHTGR). Residues 1–22 (MLQPKRTKFRKVHTGRNRGLAQ) are disordered.

The protein belongs to the universal ribosomal protein uL16 family. As to quaternary structure, part of the 50S ribosomal subunit.

Its function is as follows. Binds 23S rRNA and is also seen to make contacts with the A and possibly P site tRNAs. This is Large ribosomal subunit protein uL16 from Idiomarina loihiensis (strain ATCC BAA-735 / DSM 15497 / L2-TR).